The primary structure comprises 218 residues: dTTP/UTP pyrophosphatase (218 aa).

Residue Asp-76 is the Proton acceptor of the active site.

This sequence belongs to the Maf family. YhdE subfamily. The cofactor is a divalent metal cation.

The protein resides in the cytoplasm. It carries out the reaction dTTP + H2O = dTMP + diphosphate + H(+). It catalyses the reaction UTP + H2O = UMP + diphosphate + H(+). Functionally, nucleoside triphosphate pyrophosphatase that hydrolyzes dTTP and UTP. May have a dual role in cell division arrest and in preventing the incorporation of modified nucleotides into cellular nucleic acids. In Cytophaga hutchinsonii (strain ATCC 33406 / DSM 1761 / CIP 103989 / NBRC 15051 / NCIMB 9469 / D465), this protein is dTTP/UTP pyrophosphatase.